We begin with the raw amino-acid sequence, 440 residues long: Protein EFFECTOR OF TRANSCRIPTION (440 aa).

Residues 131-167 (SIQGLGVAVNIHDADDISHGQTESIRTRLRSYGRPVP) form the GIY-YIG domain. The segment at 172-216 (LGDNASQTITQKKTGGRSKDKKHGFEEERDVSRVEAEENNTNSVH) is disordered. Over residues 175–184 (NASQTITQKK) the composition is skewed to polar residues. The span at 194–207 (HGFEEERDVSRVEA) shows a compositional bias: basic and acidic residues. Cx9Cx9RCx2HK repeat units follow at residues 247–272 (CGVLQEDGTTCLTAPVTGRKRCTEHK) and 295–320 (CGVILPEMVRCRSKPVSGRKRCEDHK). The segment at 339-363 (ILKEDKSKPKTRTSSTNQEEPGESL) is disordered. Cx9Cx9RCx2HK repeat units follow at residues 365-390 (CEATTKNGLPCTRSAPNGSKRCWQHK) and 409-434 (CGVKLHNGSVCEKTPVKGRKRCQEHK).

The protein localises to the nucleus. Its function is as follows. Transcription regulator that negatively modulates gibberellin-mediated developmental processes. May act as transcriptional repressor of giberellin controlled genes. Binds DNA without sequence preference. In Brassica napus (Rape), this protein is Protein EFFECTOR OF TRANSCRIPTION.